Consider the following 254-residue polypeptide: 3-deoxy-manno-octulosonate cytidylyltransferase (254 aa).

It belongs to the KdsB family.

It is found in the cytoplasm. It carries out the reaction 3-deoxy-alpha-D-manno-oct-2-ulosonate + CTP = CMP-3-deoxy-beta-D-manno-octulosonate + diphosphate. Its pathway is nucleotide-sugar biosynthesis; CMP-3-deoxy-D-manno-octulosonate biosynthesis; CMP-3-deoxy-D-manno-octulosonate from 3-deoxy-D-manno-octulosonate and CTP: step 1/1. The protein operates within bacterial outer membrane biogenesis; lipopolysaccharide biosynthesis. In terms of biological role, activates KDO (a required 8-carbon sugar) for incorporation into bacterial lipopolysaccharide in Gram-negative bacteria. The sequence is that of 3-deoxy-manno-octulosonate cytidylyltransferase from Tolumonas auensis (strain DSM 9187 / NBRC 110442 / TA 4).